The chain runs to 753 residues: 5-methyltetrahydropteroyltriglutamate--homocysteine methyltransferase (753 aa).

5-methyltetrahydropteroyltri-L-glutamate-binding positions include 17–20 (RELK) and lysine 117. L-homocysteine contacts are provided by residues 431–433 (IGS) and glutamate 484. L-methionine is bound by residues 431-433 (IGS) and glutamate 484. Residues 515–516 (RC) and tryptophan 561 contribute to the 5-methyltetrahydropteroyltri-L-glutamate site. Residue aspartate 599 coordinates L-homocysteine. Aspartate 599 lines the L-methionine pocket. Residue glutamate 605 participates in 5-methyltetrahydropteroyltri-L-glutamate binding. Zn(2+) contacts are provided by histidine 641, cysteine 643, and glutamate 665. The active-site Proton donor is the histidine 694. Cysteine 726 is a Zn(2+) binding site.

This sequence belongs to the vitamin-B12 independent methionine synthase family. Zn(2+) is required as a cofactor.

The enzyme catalyses 5-methyltetrahydropteroyltri-L-glutamate + L-homocysteine = tetrahydropteroyltri-L-glutamate + L-methionine. Its pathway is amino-acid biosynthesis; L-methionine biosynthesis via de novo pathway; L-methionine from L-homocysteine (MetE route): step 1/1. In terms of biological role, catalyzes the transfer of a methyl group from 5-methyltetrahydrofolate to homocysteine resulting in methionine formation. The protein is 5-methyltetrahydropteroyltriglutamate--homocysteine methyltransferase of Cronobacter sakazakii (strain ATCC BAA-894) (Enterobacter sakazakii).